The chain runs to 432 residues: UDP-N-acetylglucosamine 1-carboxyvinyltransferase (432 aa).

A phosphoenolpyruvate-binding site is contributed by 22-23 (KN). R92 contributes to the UDP-N-acetyl-alpha-D-glucosamine binding site. C116 functions as the Proton donor in the catalytic mechanism. A 2-(S-cysteinyl)pyruvic acid O-phosphothioketal modification is found at C116. UDP-N-acetyl-alpha-D-glucosamine-binding positions include 121–125 (RPVDQ), D307, and I329.

It belongs to the EPSP synthase family. MurA subfamily.

It is found in the cytoplasm. The enzyme catalyses phosphoenolpyruvate + UDP-N-acetyl-alpha-D-glucosamine = UDP-N-acetyl-3-O-(1-carboxyvinyl)-alpha-D-glucosamine + phosphate. It functions in the pathway cell wall biogenesis; peptidoglycan biosynthesis. In terms of biological role, cell wall formation. Adds enolpyruvyl to UDP-N-acetylglucosamine. In Psychrobacter sp. (strain PRwf-1), this protein is UDP-N-acetylglucosamine 1-carboxyvinyltransferase.